The following is a 688-amino-acid chain: Glycine--tRNA ligase beta subunit (688 aa).

This sequence belongs to the class-II aminoacyl-tRNA synthetase family. Tetramer of two alpha and two beta subunits.

The protein resides in the cytoplasm. It catalyses the reaction tRNA(Gly) + glycine + ATP = glycyl-tRNA(Gly) + AMP + diphosphate. This Vibrio parahaemolyticus serotype O3:K6 (strain RIMD 2210633) protein is Glycine--tRNA ligase beta subunit.